The chain runs to 155 residues: Nucleoside diphosphate kinase, cytosolic (155 aa).

Residues K16, F64, R92, T98, R109, and N119 each contribute to the ATP site. The active-site Pros-phosphohistidine intermediate is H122.

The protein belongs to the NDK family. As to quaternary structure, homohexamer. It depends on Mg(2+) as a cofactor.

The protein localises to the cytoplasm. It carries out the reaction a 2'-deoxyribonucleoside 5'-diphosphate + ATP = a 2'-deoxyribonucleoside 5'-triphosphate + ADP. The enzyme catalyses a ribonucleoside 5'-diphosphate + ATP = a ribonucleoside 5'-triphosphate + ADP. Its function is as follows. Major role in the synthesis of nucleoside triphosphates other than ATP. The sequence is that of Nucleoside diphosphate kinase, cytosolic (ndkC-1) from Dictyostelium discoideum (Social amoeba).